Reading from the N-terminus, the 289-residue chain is UPF0725 protein At1g27860 (289 aa).

Residues 266–289 form a disordered region; the sequence is DQQRSMTLPSGEQAESSKKRPRLS. Residues 268–279 show a composition bias toward polar residues; it reads QRSMTLPSGEQA.

This sequence belongs to the UPF0725 (EMB2204) family.

In Arabidopsis thaliana (Mouse-ear cress), this protein is UPF0725 protein At1g27860.